We begin with the raw amino-acid sequence, 232 residues long: Ubiquinone biosynthesis O-methyltransferase (232 aa).

Residues R36, G55, D76, and L120 each contribute to the S-adenosyl-L-methionine site.

It belongs to the methyltransferase superfamily. UbiG/COQ3 family.

It carries out the reaction a 3-demethylubiquinol + S-adenosyl-L-methionine = a ubiquinol + S-adenosyl-L-homocysteine + H(+). It catalyses the reaction a 3-(all-trans-polyprenyl)benzene-1,2-diol + S-adenosyl-L-methionine = a 2-methoxy-6-(all-trans-polyprenyl)phenol + S-adenosyl-L-homocysteine + H(+). It functions in the pathway cofactor biosynthesis; ubiquinone biosynthesis. Functionally, O-methyltransferase that catalyzes the 2 O-methylation steps in the ubiquinone biosynthetic pathway. The protein is Ubiquinone biosynthesis O-methyltransferase of Pseudomonas savastanoi pv. phaseolicola (strain 1448A / Race 6) (Pseudomonas syringae pv. phaseolicola (strain 1448A / Race 6)).